Consider the following 510-residue polypeptide: D-alanine--D-alanyl carrier protein ligase (510 aa).

157–158 (TS) is an ATP binding site. Position 202 (Asp202) interacts with D-alanine. Residue 297-302 (NTYGPT) coordinates ATP. Val306 contributes to the D-alanine binding site. ATP contacts are provided by Asp389 and Lys498. Residue Lys498 participates in D-alanine binding.

It belongs to the ATP-dependent AMP-binding enzyme family. DltA subfamily.

The protein resides in the cytoplasm. The enzyme catalyses holo-[D-alanyl-carrier protein] + D-alanine + ATP = D-alanyl-[D-alanyl-carrier protein] + AMP + diphosphate. It functions in the pathway cell wall biogenesis; lipoteichoic acid biosynthesis. Its function is as follows. Catalyzes the first step in the D-alanylation of lipoteichoic acid (LTA), the activation of D-alanine and its transfer onto the D-alanyl carrier protein (Dcp) DltC. In an ATP-dependent two-step reaction, forms a high energy D-alanyl-AMP intermediate, followed by transfer of the D-alanyl residue as a thiol ester to the phosphopantheinyl prosthetic group of the Dcp. D-alanylation of LTA plays an important role in modulating the properties of the cell wall in Gram-positive bacteria, influencing the net charge of the cell wall. This is D-alanine--D-alanyl carrier protein ligase from Listeria monocytogenes serotype 4b (strain F2365).